We begin with the raw amino-acid sequence, 265 residues long: ETS-related transcription factor Elf-5 (265 aa).

The region spanning 43–129 is the PNT domain; the sequence is YPAFEHQTAC…FILQNIRTQG (87 aa). Residues 173–254 constitute a DNA-binding region (ETS); that stretch reads SHLWEFVRDL…VDRRLVYKFG (82 aa).

The protein belongs to the ETS family. As to expression, expressed exclusively in tissues with a high content of epithelial cells. Highly expressed in salivary gland, mammary gland, kidney and prostate. Weakly expressed in placenta and lung. Isoform 1 and isoform 2 are differentially expressed in different tissues. In the kidney, only isoform 1 was expressed, while prostate expressed both isoforms, with levels of isoform 2 being higher. Expression is up-regulated during keratinocyte differentiation. Several epithelial carcinoma cell lines showed lack of expression.

The protein resides in the nucleus. Transcriptionally activator that may play a role in regulating the later stages of keratinocytes terminal differentiation. Functionally, isoform 2 binds to DNA sequences containing the consensus nucleotide core sequence GGA[AT]. Transcriptionally activates SPRR2A and the parotid gland-specific PSP promoters. The chain is ETS-related transcription factor Elf-5 (ELF5) from Homo sapiens (Human).